Reading from the N-terminus, the 416-residue chain is D-amino acid dehydrogenase (416 aa).

Position 3-17 (3-17 (ITILGSGVIGVTTAY)) interacts with FAD.

Belongs to the DadA oxidoreductase family. It depends on FAD as a cofactor.

The catalysed reaction is a D-alpha-amino acid + A + H2O = a 2-oxocarboxylate + AH2 + NH4(+). It functions in the pathway amino-acid degradation; D-alanine degradation; NH(3) and pyruvate from D-alanine: step 1/1. In terms of biological role, oxidative deamination of D-amino acids. In Brucella canis (strain ATCC 23365 / NCTC 10854 / RM-666), this protein is D-amino acid dehydrogenase.